A 180-amino-acid polypeptide reads, in one-letter code: Ribulose bisphosphate carboxylase small subunit, chloroplastic 2 (180 aa).

A chloroplast-targeting transit peptide spans 1–54 (MASMMSNAAVVGRTTPAQASMVAPFTGLKSVSAFPVTKKSNDITSIASNGGRVQ).

It belongs to the RuBisCO small chain family. Heterohexadecamer of 8 large and 8 small subunits.

The protein resides in the plastid. Its subcellular location is the chloroplast. Functionally, ruBisCO catalyzes two reactions: the carboxylation of D-ribulose 1,5-bisphosphate, the primary event in carbon dioxide fixation, as well as the oxidative fragmentation of the pentose substrate. Both reactions occur simultaneously and in competition at the same active site. Although the small subunit is not catalytic it is essential for maximal activity. The chain is Ribulose bisphosphate carboxylase small subunit, chloroplastic 2 from Mesembryanthemum crystallinum (Common ice plant).